Consider the following 365-residue polypeptide: Elongation factor Tu (365 aa).

GTP-binding positions include 1–7 (HVDHGKT), 62–66 (DCPGH), and 117–120 (NKCD). The tr-type G domain occupies 1-185 (HVDHGKTTLT…ILDTYIPEPK (185 aa)). T7 lines the Mg(2+) pocket.

It belongs to the TRAFAC class translation factor GTPase superfamily. Classic translation factor GTPase family. EF-Tu/EF-1A subfamily. As to quaternary structure, monomer.

It localises to the cytoplasm. The catalysed reaction is GTP + H2O = GDP + phosphate + H(+). Functionally, GTP hydrolase that promotes the GTP-dependent binding of aminoacyl-tRNA to the A-site of ribosomes during protein biosynthesis. The sequence is that of Elongation factor Tu from Buchnera aphidicola subsp. Melaphis rhois.